We begin with the raw amino-acid sequence, 212 residues long: Uracil phosphoribosyltransferase (212 aa).

Residues Arg78, Arg103, and 130–138 (DPMLATGGS) contribute to the 5-phospho-alpha-D-ribose 1-diphosphate site. Uracil is bound by residues Ile193 and 198-200 (GDA). Asp199 is a binding site for 5-phospho-alpha-D-ribose 1-diphosphate.

This sequence belongs to the UPRTase family. Mg(2+) is required as a cofactor.

The catalysed reaction is UMP + diphosphate = 5-phospho-alpha-D-ribose 1-diphosphate + uracil. The protein operates within pyrimidine metabolism; UMP biosynthesis via salvage pathway; UMP from uracil: step 1/1. Allosterically activated by GTP. Functionally, catalyzes the conversion of uracil and 5-phospho-alpha-D-ribose 1-diphosphate (PRPP) to UMP and diphosphate. This is Uracil phosphoribosyltransferase from Pseudomonas putida (strain ATCC 700007 / DSM 6899 / JCM 31910 / BCRC 17059 / LMG 24140 / F1).